The chain runs to 346 residues: Histone H1.8 (346 aa).

Composition is skewed to low complexity over residues 1-23 (MAPGSVTSDISPSSTSTAGSSRS) and 38-48 (PGGPSHSSLPV). Disordered stretches follow at residues 1-50 (MAPG…PVGR) and 121-346 (ATGS…RAEA). The 79-residue stretch at 51–129 (RHPPVLRMVL…GATGSFKLVP (79 aa)) folds into the H15 domain. Positions 128 to 137 (VPKHKKKIQP) are enriched in basic residues. Residues 148-167 (RAGEAKGKGPKKPSEAKEDP) show a composition bias toward basic and acidic residues. Residues 164–179 (KEDPPNVGKVKKAAKR) carry the Nuclear localization signal motif. The span at 172 to 182 (KVKKAAKRPAK) shows a compositional bias: basic residues. Basic and acidic residues-rich tracts occupy residues 205–225 (KDTRAQSGEARKVPPKPDKAM) and 251–262 (EAYRKTKAESKS). Residues 278–288 (TKKKVVAKAKA) show a composition bias toward basic residues. The span at 298–309 (KAAAPAKGSGSK) shows a compositional bias: low complexity. Residues 334 to 346 (ASSSKVSSQRAEA) show a composition bias toward polar residues.

The protein belongs to the histone H1/H5 family. Oocyte-specific.

Its subcellular location is the cytoplasm. It is found in the nucleus. It localises to the chromosome. May play a key role in the control of gene expression during oogenesis and early embryogenesis, presumably through the perturbation of chromatin structure. Essential for meiotic maturation of germinal vesicle-stage oocytes. The somatic type linker histone H1c is rapidly replaced by H1oo in a donor nucleus transplanted into an oocyte. The greater mobility of H1oo as compared to H1c may contribute to this rapid replacement and increased instability of the embryonic chromatin structure. The rapid replacement of H1c with H1oo may play an important role in nuclear remodeling. The chain is Histone H1.8 from Homo sapiens (Human).